Reading from the N-terminus, the 300-residue chain is Acetylglutamate kinase (300 aa).

Substrate is bound by residues 73 to 74, Arg-95, and Asn-197; that span reads GG.

This sequence belongs to the acetylglutamate kinase family. ArgB subfamily.

It is found in the cytoplasm. The enzyme catalyses N-acetyl-L-glutamate + ATP = N-acetyl-L-glutamyl 5-phosphate + ADP. It functions in the pathway amino-acid biosynthesis; L-arginine biosynthesis; N(2)-acetyl-L-ornithine from L-glutamate: step 2/4. In terms of biological role, catalyzes the ATP-dependent phosphorylation of N-acetyl-L-glutamate. This Polynucleobacter necessarius subsp. necessarius (strain STIR1) protein is Acetylglutamate kinase.